The primary structure comprises 440 residues: Glutamyl-tRNA reductase (440 aa).

Substrate is bound by residues 50–53 (TCNR), Ser-109, 114–116 (EPQ), and Gln-120. Catalysis depends on Cys-51, which acts as the Nucleophile. An NADP(+)-binding site is contributed by 189 to 194 (GAGEMA).

The protein belongs to the glutamyl-tRNA reductase family. In terms of assembly, homodimer.

It carries out the reaction (S)-4-amino-5-oxopentanoate + tRNA(Glu) + NADP(+) = L-glutamyl-tRNA(Glu) + NADPH + H(+). It functions in the pathway porphyrin-containing compound metabolism; protoporphyrin-IX biosynthesis; 5-aminolevulinate from L-glutamyl-tRNA(Glu): step 1/2. Functionally, catalyzes the NADPH-dependent reduction of glutamyl-tRNA(Glu) to glutamate 1-semialdehyde (GSA). The chain is Glutamyl-tRNA reductase from Nitratidesulfovibrio vulgaris (strain DP4) (Desulfovibrio vulgaris).